The following is a 150-amino-acid chain: Transcriptional repressor NrdR (150 aa).

Residues 3-34 fold into a zinc finger; it reads CPFCNFEESKVVDSRATDDNTTIRRRRECLNC. The 91-residue stretch at 49–139 folds into the ATP-cone domain; the sequence is VLVVKKDLTR…VYRQFKDINT (91 aa).

It belongs to the NrdR family. Zn(2+) is required as a cofactor.

Negatively regulates transcription of bacterial ribonucleotide reductase nrd genes and operons by binding to NrdR-boxes. The chain is Transcriptional repressor NrdR from Clostridium botulinum (strain Alaska E43 / Type E3).